The chain runs to 107 residues: uncharacterized protein (107 aa).

Positions 1–32 (MDSLASGRWRRRRTEELPAAGDAKRACRRSEP) are disordered. A compositionally biased stretch (basic and acidic residues) spans 22 to 31 (DAKRACRRSE).

This is an uncharacterized protein from Mus musculus (Mouse).